A 57-amino-acid chain; its full sequence is UPF0509 protein YciZ (57 aa).

Belongs to the UPF0509 family.

The polypeptide is UPF0509 protein YciZ (yciZ) (Escherichia coli O157:H7).